Reading from the N-terminus, the 247-residue chain is Carboxy-S-adenosyl-L-methionine synthase (247 aa).

Residues Tyr-39, 64–66, 89–90, 117–118, Asn-132, and Arg-199 each bind S-adenosyl-L-methionine; these read GCS, DN, and DI.

It belongs to the class I-like SAM-binding methyltransferase superfamily. Cx-SAM synthase family. In terms of assembly, homodimer.

The catalysed reaction is prephenate + S-adenosyl-L-methionine = carboxy-S-adenosyl-L-methionine + 3-phenylpyruvate + H2O. Functionally, catalyzes the conversion of S-adenosyl-L-methionine (SAM) to carboxy-S-adenosyl-L-methionine (Cx-SAM). This chain is Carboxy-S-adenosyl-L-methionine synthase, found in Salmonella arizonae (strain ATCC BAA-731 / CDC346-86 / RSK2980).